Here is a 378-residue protein sequence, read N- to C-terminus: Erythronate-4-phosphate dehydrogenase (378 aa).

The substrate site is built by Ser-45 and Thr-66. Positions 146 and 175 each coordinate NAD(+). The active site involves Arg-208. Residue Asp-232 coordinates NAD(+). The active site involves Glu-237. His-254 (proton donor) is an active-site residue. Gly-257 contributes to the NAD(+) binding site. Tyr-258 contributes to the substrate binding site.

The protein belongs to the D-isomer specific 2-hydroxyacid dehydrogenase family. PdxB subfamily. Homodimer.

It localises to the cytoplasm. It catalyses the reaction 4-phospho-D-erythronate + NAD(+) = (R)-3-hydroxy-2-oxo-4-phosphooxybutanoate + NADH + H(+). The protein operates within cofactor biosynthesis; pyridoxine 5'-phosphate biosynthesis; pyridoxine 5'-phosphate from D-erythrose 4-phosphate: step 2/5. In terms of biological role, catalyzes the oxidation of erythronate-4-phosphate to 3-hydroxy-2-oxo-4-phosphonooxybutanoate. This is Erythronate-4-phosphate dehydrogenase from Escherichia coli (strain K12 / MC4100 / BW2952).